The sequence spans 229 residues: Aspartate-rich protein 1 (229 aa).

The segment at 84–106 is disordered; that stretch reads SEEDNDDAKILPSPVQGSSEDNL.

This Homo sapiens (Human) protein is Aspartate-rich protein 1 (DRICH1).